Here is a 604-residue protein sequence, read N- to C-terminus: Sulfite reductase [NADPH] flavoprotein alpha-component (604 aa).

The region spanning 65-203 (VTILYGSQTG…AAGQWHADVL (139 aa)) is the Flavodoxin-like domain. Residues 71 to 76 (SQTGNG), 118 to 121 (STHG), and 154 to 163 (LGDSSYEFFC) contribute to the FMN site. In terms of domain architecture, FAD-binding FR-type spans 236-453 (QNPYSAEVLV…VEPNKHFRLP (218 aa)). Residues Thr-324, Leu-358, 392-395 (RLYS), 410-412 (TVA), and 425-428 (GGAS) each bind FAD. NADP(+) contacts are provided by residues 524–525 (SR), 530–534 (KIYVQ), and Asp-566. Tyr-604 is an FAD binding site.

This sequence belongs to the NADPH-dependent sulphite reductase flavoprotein subunit CysJ family. It in the N-terminal section; belongs to the flavodoxin family. The protein in the C-terminal section; belongs to the flavoprotein pyridine nucleotide cytochrome reductase family. As to quaternary structure, alpha(8)-beta(8). The alpha component is a flavoprotein, the beta component is a hemoprotein. It depends on FAD as a cofactor. FMN serves as cofactor.

It catalyses the reaction hydrogen sulfide + 3 NADP(+) + 3 H2O = sulfite + 3 NADPH + 4 H(+). It functions in the pathway sulfur metabolism; hydrogen sulfide biosynthesis; hydrogen sulfide from sulfite (NADPH route): step 1/1. In terms of biological role, component of the sulfite reductase complex that catalyzes the 6-electron reduction of sulfite to sulfide. This is one of several activities required for the biosynthesis of L-cysteine from sulfate. The flavoprotein component catalyzes the electron flow from NADPH -&gt; FAD -&gt; FMN to the hemoprotein component. This Shewanella sp. (strain MR-7) protein is Sulfite reductase [NADPH] flavoprotein alpha-component.